Here is a 354-residue protein sequence, read N- to C-terminus: Elongation factor Ts (354 aa).

Residues 81–84 are involved in Mg(2+) ion dislocation from EF-Tu; it reads TDFV.

The protein belongs to the EF-Ts family.

The protein resides in the cytoplasm. Associates with the EF-Tu.GDP complex and induces the exchange of GDP to GTP. It remains bound to the aminoacyl-tRNA.EF-Tu.GTP complex up to the GTP hydrolysis stage on the ribosome. The sequence is that of Elongation factor Ts from Campylobacter curvus (strain 525.92).